Here is a 417-residue protein sequence, read N- to C-terminus: Serine hydroxymethyltransferase (417 aa).

(6S)-5,6,7,8-tetrahydrofolate contacts are provided by residues L112 and 116 to 118 (GHL). Residue K221 is modified to N6-(pyridoxal phosphate)lysine. E247 is a binding site for (6S)-5,6,7,8-tetrahydrofolate.

The protein belongs to the SHMT family. Homodimer. Requires pyridoxal 5'-phosphate as cofactor.

It localises to the cytoplasm. It carries out the reaction (6R)-5,10-methylene-5,6,7,8-tetrahydrofolate + glycine + H2O = (6S)-5,6,7,8-tetrahydrofolate + L-serine. It functions in the pathway one-carbon metabolism; tetrahydrofolate interconversion. Its pathway is amino-acid biosynthesis; glycine biosynthesis; glycine from L-serine: step 1/1. Catalyzes the reversible interconversion of serine and glycine with tetrahydrofolate (THF) serving as the one-carbon carrier. This reaction serves as the major source of one-carbon groups required for the biosynthesis of purines, thymidylate, methionine, and other important biomolecules. Also exhibits THF-independent aldolase activity toward beta-hydroxyamino acids, producing glycine and aldehydes, via a retro-aldol mechanism. The polypeptide is Serine hydroxymethyltransferase (Borreliella afzelii (strain PKo) (Borrelia afzelii)).